The primary structure comprises 31 residues: Sarcolipin (31 aa).

The Cytoplasmic portion of the chain corresponds to Met-1–Glu-7. The chain crosses the membrane as a helical span at residues Leu-8–Val-26. At Arg-27–Tyr-31 the chain is on the lumenal side.

This sequence belongs to the sarcolipin family. Homooligomer. Can also form heterooligomers with other sarcoplasmic/endoplasmic reticulum calcium ATPase (SERCA) regulators ARLN, ERLN, PLN and STRIT1/DWORF. Monomer. Interacts with calcium ATPase ATP2A1/SERCA1. Interacts as a monomer with ATP2A2/SERCA2; the interaction decreases ATP2A2 Ca(2+) affinity. Interacts with VMP1; VMP1 competes with PLN and SLN to prevent them from forming an inhibitory complex with ATP2A2.

Its subcellular location is the sarcoplasmic reticulum membrane. It localises to the endoplasmic reticulum membrane. Its function is as follows. Reversibly inhibits the activity of ATP2A1/SERCA1 and ATP2A2/SERCA2 in sarcoplasmic reticulum by decreasing the apparent affinity of the ATPase for Ca(2+). Also inhibits the activity of ATP2A3/SERCA3. Modulates calcium re-uptake during muscle relaxation and plays an important role in calcium homeostasis in muscle. Required for muscle-based, non-shivering thermogenesis. The protein is Sarcolipin of Homo sapiens (Human).